Consider the following 906-residue polypeptide: Protein translocase subunit SecA (906 aa).

ATP-binding positions include Q86, G104 to T108, and D499. The tract at residues P863–S885 is disordered. Positions 890, 892, 901, and 902 each coordinate Zn(2+).

It belongs to the SecA family. As to quaternary structure, monomer and homodimer. Part of the essential Sec protein translocation apparatus which comprises SecA, SecYEG and auxiliary proteins SecDF-YajC and YidC. Zn(2+) is required as a cofactor.

It is found in the cell inner membrane. The protein localises to the cytoplasm. The catalysed reaction is ATP + H2O + cellular proteinSide 1 = ADP + phosphate + cellular proteinSide 2.. In terms of biological role, part of the Sec protein translocase complex. Interacts with the SecYEG preprotein conducting channel. Has a central role in coupling the hydrolysis of ATP to the transfer of proteins into and across the cell membrane, serving both as a receptor for the preprotein-SecB complex and as an ATP-driven molecular motor driving the stepwise translocation of polypeptide chains across the membrane. The sequence is that of Protein translocase subunit SecA from Rickettsia akari (strain Hartford).